The primary structure comprises 442 residues: tRNA-2-methylthio-N(6)-dimethylallyladenosine synthase (442 aa).

One can recognise an MTTase N-terminal domain in the interval 2–120 (KKVFIRTFGC…LPKMIVDKET (119 aa)). [4Fe-4S] cluster-binding residues include Cys11, Cys49, Cys83, Cys157, Cys161, and Cys164. The Radical SAM core domain maps to 143–375 (RVEGGAAFVS…NEVIEAETAR (233 aa)). The 64-residue stretch at 378 to 441 (QTMIGTVQRC…TFSLRGKIVE (64 aa)) folds into the TRAM domain.

The protein belongs to the methylthiotransferase family. MiaB subfamily. Monomer. [4Fe-4S] cluster is required as a cofactor.

It localises to the cytoplasm. It catalyses the reaction N(6)-dimethylallyladenosine(37) in tRNA + (sulfur carrier)-SH + AH2 + 2 S-adenosyl-L-methionine = 2-methylsulfanyl-N(6)-dimethylallyladenosine(37) in tRNA + (sulfur carrier)-H + 5'-deoxyadenosine + L-methionine + A + S-adenosyl-L-homocysteine + 2 H(+). Functionally, catalyzes the methylthiolation of N6-(dimethylallyl)adenosine (i(6)A), leading to the formation of 2-methylthio-N6-(dimethylallyl)adenosine (ms(2)i(6)A) at position 37 in tRNAs that read codons beginning with uridine. This chain is tRNA-2-methylthio-N(6)-dimethylallyladenosine synthase, found in Neisseria gonorrhoeae (strain ATCC 700825 / FA 1090).